A 380-amino-acid chain; its full sequence is Cell division protein FtsZ (380 aa).

Residues G27–N31, G119–G121, E150, and N189 each bind GTP.

Belongs to the FtsZ family. As to quaternary structure, homodimer. Polymerizes to form a dynamic ring structure in a strictly GTP-dependent manner. Interacts directly with several other division proteins.

Its subcellular location is the cytoplasm. Essential cell division protein that forms a contractile ring structure (Z ring) at the future cell division site. The regulation of the ring assembly controls the timing and the location of cell division. One of the functions of the FtsZ ring is to recruit other cell division proteins to the septum to produce a new cell wall between the dividing cells. Binds GTP and shows GTPase activity. This chain is Cell division protein FtsZ, found in Mycoplasma pneumoniae (strain ATCC 29342 / M129 / Subtype 1) (Mycoplasmoides pneumoniae).